Here is a 301-residue protein sequence, read N- to C-terminus: Dimethylsulfoniopropionate lyase (301 aa).

Residues Cys-111 and Cys-230 each act as proton donor/acceptor in the active site.

This sequence belongs to the aspartate/glutamate racemases family. ALMA1 subfamily. In terms of assembly, homotetramer.

The catalysed reaction is S,S-dimethyl-beta-propiothetin = acrylate + dimethyl sulfide + H(+). Mediates cleavage of dimethylsulfoniopropionate (DMSP) into dimethyl sulfide (DMS) and acrylate. DMS is the principal form by which sulfur is transported from oceans to the atmosphere and is a key component of the ocean sulfur cycle. The polypeptide is Dimethylsulfoniopropionate lyase (Durusdinium sp. clade D (Symbiodinium sp. clade D)).